We begin with the raw amino-acid sequence, 230 residues long: Phosphoglycerate mutase-like protein 4 (230 aa).

H21 serves as the catalytic Tele-phosphohistidine intermediate. The active-site Proton donor/acceptor is the E96.

Belongs to the phosphoglycerate mutase family.

Its function is as follows. May play a role in carbohydrates metabolism. In Arabidopsis thaliana (Mouse-ear cress), this protein is Phosphoglycerate mutase-like protein 4.